Reading from the N-terminus, the 111-residue chain is Gene 81 protein (111 aa).

The polypeptide is Gene 81 protein (81) (Mycobacterium (Mycobacteriophage L5)).